The following is a 156-amino-acid chain: 2-C-methyl-D-erythritol 2,4-cyclodiphosphate synthase (156 aa).

2 residues coordinate a divalent metal cation: Asp10 and His12. 4-CDP-2-C-methyl-D-erythritol 2-phosphate is bound by residues 10-12 and 36-37; these read DSH and HS. Residue His44 coordinates a divalent metal cation. Residues 58 to 60 and 63 to 67 contribute to the 4-CDP-2-C-methyl-D-erythritol 2-phosphate site; these read DIG and FKDTD.

It belongs to the IspF family. As to quaternary structure, homotrimer. The cofactor is a divalent metal cation.

It catalyses the reaction 4-CDP-2-C-methyl-D-erythritol 2-phosphate = 2-C-methyl-D-erythritol 2,4-cyclic diphosphate + CMP. It participates in isoprenoid biosynthesis; isopentenyl diphosphate biosynthesis via DXP pathway; isopentenyl diphosphate from 1-deoxy-D-xylulose 5-phosphate: step 4/6. Functionally, involved in the biosynthesis of isopentenyl diphosphate (IPP) and dimethylallyl diphosphate (DMAPP), two major building blocks of isoprenoid compounds. Catalyzes the conversion of 4-diphosphocytidyl-2-C-methyl-D-erythritol 2-phosphate (CDP-ME2P) to 2-C-methyl-D-erythritol 2,4-cyclodiphosphate (ME-CPP) with a corresponding release of cytidine 5-monophosphate (CMP). The protein is 2-C-methyl-D-erythritol 2,4-cyclodiphosphate synthase of Aquifex aeolicus (strain VF5).